We begin with the raw amino-acid sequence, 473 residues long: Photosystem II CP43 reaction center protein (473 aa).

The propeptide occupies 1–14 (MKTLYSLRRFYHVE). At Thr-15 the chain carries N-acetylthreonine. Thr-15 carries the phosphothreonine modification. The next 5 membrane-spanning stretches (helical) occupy residues 69–93 (LFEV…PHLA), 134–155 (LIGP…KDKN), 178–200 (KACY…RIIT), 255–275 (KPWA…LSYS), and 291–312 (WFNN…ASQA). Glu-367 provides a ligand contact to [CaMn4O5] cluster. The helical transmembrane segment at 447–471 (RARAAAAGFEKGIERETEPVLFMKP) threads the bilayer.

Belongs to the PsbB/PsbC family. PsbC subfamily. In terms of assembly, PSII is composed of 1 copy each of membrane proteins PsbA, PsbB, PsbC, PsbD, PsbE, PsbF, PsbH, PsbI, PsbJ, PsbK, PsbL, PsbM, PsbT, PsbX, PsbY, PsbZ, Psb30/Ycf12, at least 3 peripheral proteins of the oxygen-evolving complex and a large number of cofactors. It forms dimeric complexes. Binds multiple chlorophylls and provides some of the ligands for the Ca-4Mn-5O cluster of the oxygen-evolving complex. It may also provide a ligand for a Cl- that is required for oxygen evolution. PSII binds additional chlorophylls, carotenoids and specific lipids. is required as a cofactor.

It localises to the plastid. It is found in the chloroplast thylakoid membrane. Functionally, one of the components of the core complex of photosystem II (PSII). It binds chlorophyll and helps catalyze the primary light-induced photochemical processes of PSII. PSII is a light-driven water:plastoquinone oxidoreductase, using light energy to abstract electrons from H(2)O, generating O(2) and a proton gradient subsequently used for ATP formation. The chain is Photosystem II CP43 reaction center protein from Mesostigma viride (Green alga).